We begin with the raw amino-acid sequence, 597 residues long: CTP synthase (597 aa).

Positions 1–272 (MARPKNVKYV…DMRVLKKLGL (272 aa)) are amidoligase domain. Ser-18 provides a ligand contact to CTP. Ser-18 is a binding site for UTP. 19-24 (SLGKGI) provides a ligand contact to ATP. L-glutamine is bound at residue Tyr-59. ATP is bound at residue Asp-76. Asp-76 and Glu-146 together coordinate Mg(2+). CTP-binding positions include 153 to 155 (DIE), 193 to 198 (KTKPTQ), and Lys-229. Residues 193–198 (KTKPTQ) and Lys-229 each bind UTP. The region spanning 299–543 (NVAICGKYTE…VGAAKAYADG (245 aa)) is the Glutamine amidotransferase type-1 domain. Gly-363 contacts L-glutamine. Residue Cys-390 is the Nucleophile; for glutamine hydrolysis of the active site. Residues 391 to 394 (LGMQ), Glu-414, and Arg-471 contribute to the L-glutamine site. Catalysis depends on residues His-516 and Glu-518.

This sequence belongs to the CTP synthase family. Homotetramer.

The enzyme catalyses UTP + L-glutamine + ATP + H2O = CTP + L-glutamate + ADP + phosphate + 2 H(+). It catalyses the reaction L-glutamine + H2O = L-glutamate + NH4(+). The catalysed reaction is UTP + NH4(+) + ATP = CTP + ADP + phosphate + 2 H(+). It functions in the pathway pyrimidine metabolism; CTP biosynthesis via de novo pathway; CTP from UDP: step 2/2. Its activity is regulated as follows. Allosterically activated by GTP, when glutamine is the substrate; GTP has no effect on the reaction when ammonia is the substrate. The allosteric effector GTP functions by stabilizing the protein conformation that binds the tetrahedral intermediate(s) formed during glutamine hydrolysis. Inhibited by the product CTP, via allosteric rather than competitive inhibition. Its function is as follows. Catalyzes the ATP-dependent amination of UTP to CTP with either L-glutamine or ammonia as the source of nitrogen. Regulates intracellular CTP levels through interactions with the four ribonucleotide triphosphates. The protein is CTP synthase of Chlorobium luteolum (strain DSM 273 / BCRC 81028 / 2530) (Pelodictyon luteolum).